The primary structure comprises 247 residues: Transmembrane protein 33 (247 aa).

Ala2 is subject to N-acetylalanine. Over 2-31 (ADTTPNGPQGAGAVQFMMTNKLDTAMWLSR) the chain is Lumenal. A helical membrane pass occupies residues 32 to 52 (LFTVYCSALFVLPLLGLHEAA). Residues 53–100 (SFYQRALLANALTSALRLHQRLPHFQLSRAFLAQALLEDSCHYLLYSL) lie on the Cytoplasmic side of the membrane. Residues 101 to 121 (IFVNSYPVTMSIFPVLLFSLL) traverse the membrane as a helical segment. The Lumenal portion of the chain corresponds to 122-155 (HAATYTKKVLDAKGSNSLPLLRSFLDKLSTNQQN). The chain crosses the membrane as a helical span at residues 156–176 (ILKFIACNEIFLMPATVFMLF). At 177–247 (SGQGSLLQPF…FISRLAPTVA (71 aa)) the chain is on the cytoplasmic side.

The protein belongs to the PER33/POM33 family. In terms of assembly, interacts with EIF2AK3. Interacts with RTN1, RTN2, RTN3, RTN4 and ARL6IP1. Interacts with RNF5. Interacts with RNF26. Interacts with PKD2.

It is found in the endoplasmic reticulum membrane. The protein resides in the melanosome. It localises to the nucleus envelope. Acts as a regulator of the tubular endoplasmic reticulum (ER) network by modulating intracellular calcium homeostasis. Mechanistically, stimulates PKD2 calcium-dependent activity. Suppresses the RTN3/4-induced formation of the ER tubules. Positively regulates PERK-mediated and IRE1-mediated unfolded protein response signaling. Plays an essential role in VEGF-mediated release of Ca(2+) from ER stores during angiogenesis. Also plays a role in the modulation of innate immune signaling through the cGAS-STING pathway by interacting with RNF26. Participates in lipid metabolism by acting as a downstream effector of the pyruvate kinase/PKM. Forms a complex with RNF5 to facilitate polyubiquitination and subsequent degradation of SCAP on the ER membrane. This Mus musculus (Mouse) protein is Transmembrane protein 33 (Tmem33).